We begin with the raw amino-acid sequence, 345 residues long: OVARIAN TUMOR DOMAIN-containing deubiquitinating enzyme 9 (345 aa).

The region spanning 204–328 (LVENKIEGDG…EVHYNSIYPE (125 aa)) is the OTU domain. D212 is a catalytic residue. C215 acts as the Nucleophile in catalysis. The active site involves H321.

It belongs to the peptidase C85 family.

It carries out the reaction Thiol-dependent hydrolysis of ester, thioester, amide, peptide and isopeptide bonds formed by the C-terminal Gly of ubiquitin (a 76-residue protein attached to proteins as an intracellular targeting signal).. Its function is as follows. Hydrolase that can remove conjugated ubiquitin from proteins in vitro and may therefore play an important regulatory role at the level of protein turnover by preventing degradation. Cysteine protease with a preference for 'Lys-63' and 'Lys-48' -linked ubiquitin (UB) tetramers as substrates. Also cleaves RUB-GST fusion. This Arabidopsis thaliana (Mouse-ear cress) protein is OVARIAN TUMOR DOMAIN-containing deubiquitinating enzyme 9.